A 505-amino-acid polypeptide reads, in one-letter code: Maturase K (505 aa).

It belongs to the intron maturase 2 family. MatK subfamily.

It is found in the plastid. It localises to the chloroplast. Its function is as follows. Usually encoded in the trnK tRNA gene intron. Probably assists in splicing its own and other chloroplast group II introns. The chain is Maturase K from Rosa stellata (Star rose).